A 294-amino-acid polypeptide reads, in one-letter code: Tyrosine-protein phosphatase (294 aa).

An N-terminal signal peptide occupies residues 1 to 24; it reads MKTHHANLALALMLGLSSSATAVA. Cys-182 serves as the catalytic Phosphocysteine intermediate. Basic and acidic residues-rich tracts occupy residues 221–231 and 238–247; these read QPKDSDERADH and PGDRPQDGGH. A disordered region spans residues 221 to 252; that stretch reads QPKDSDERADHGAGQAEPGDRPQDGGHGRYRA.

Belongs to the protein-tyrosine phosphatase family. In terms of assembly, monomer.

It carries out the reaction O-phospho-L-tyrosyl-[protein] + H2O = L-tyrosyl-[protein] + phosphate. The protein is Tyrosine-protein phosphatase (iphP) of Nostoc commune.